The sequence spans 563 residues: MDSLYKWFSTIYQGKDTCIDQDVFLSTEIQSIEIQPEEKPSEEKQPEEKSSEEKPKLQPVSAINSEKTQKPISSVALPNEDFNKLLYNFPSLSRRPQPKTTTERPQPKTTMDDKQVVVTFITERGRSCELSSERSRYRSPERSRYRSPERSRYRSPERSRYRSPERSRYRSPERSRYRSPERSHYRSPDRSHYRSHNKSTERSHYRSTERSRYRSPERSHYRSPEISRKRSRDESREKSLGRSRKMSRDESREKSLNESHKRSRDESQEKSYEPRPAKKLREKSPDEHQEKHQEKSPEKQVEITKPLEDYIALPKENVPDVFEIEKSQSTRYFSEKARIYFKNTHDGSIVWYKDDAIHRDGDLPAVIESDGTVKYYRDGKIHREGDKPAIIIPGKGKSWYLDGKLHRDGDEPAYVSNDGTLKWYRHGLLHRENDNPAIINLDGSMVWYVDGKLHRGGDLPAIIKPGICFKWYVNGHVHRDNDLPAIINIFKMPKLCNMYRIGDMVWYQHGQRHRSGGKPAIVTFRGVLFYFENGRRIYESPNGKEYYNMTANKLMMDFPYLLE.

Residues 30–303 (QSIEIQPEEK…EKSPEKQVEI (274 aa)) form a disordered region. Residues 36–56 (PEEKPSEEKQPEEKSSEEKPK) are compositionally biased toward basic and acidic residues. Residues 61–72 (SAINSEKTQKPI) show a composition bias toward polar residues. Basic and acidic residues-rich tracts occupy residues 101 to 115 (TTER…DDKQ), 123 to 276 (ERGR…EPRP), and 282 to 303 (EKSP…QVEI).

This sequence belongs to the mimivirus L41 family.

This is an uncharacterized protein from Acanthamoeba polyphaga (Amoeba).